Consider the following 648-residue polypeptide: MDDTEKRVHKYIEKHDLIRSDDKLLVAVSGGPDSLALLHFLWNSNLVPKEAISVAHLNHQLRENAAKEQRVVETFCERQGIPFYIEEVDIKSRAQSLQKGLEETARIVRYDFFEKVMAEKNINKLVLAHHADDQIETILMRLVRGSASIGWSGIQPKRELKGGQAIRPFLPITKAEIIDYAQKHELAYEIDESNTSQEYTRNRYRAQLLPFLKQENPAVYSHFERFSEETSEDFQFLEALASDLLKKNLIKNGKQTTLLLSSFKNEANPLQRRAIHLLLRYLYNEDASFITVNHIYQIIQMIQSDNPSSSIDLPNKLIANRAYDKLHFQFGEREAPSEFYHQLELNDRIELDNKASIRLKLKSSVVQTNGLNGMLLDAEEITLPLIVRNRVNGDRMTMKGQAGSKKLKDIFIDAKIPRQERDKLPVITDYTGKILWVPGVKKSAYDREFSRSKKQYIIRYTRNIGGNESMHNDIQKVLISEDELQEKIRELGRELTTEYEGRNPLVVGVLKGATPFMTDLLKRVDTYLEMDFMDVSSYGNGTVSSGEVKIIKDLNASVEGRDVLVIEDIIDSGRTLSYLVDLIKYRKAKSVKLVTLLDKPAGRNVEIEADYVGFVVPNEFVVGYGLDYAERYRNLPYIGILKPEIYSE.

Residue 29–34 (SGGPDS) participates in ATP binding. D627 contacts Mg(2+).

The protein in the N-terminal section; belongs to the tRNA(Ile)-lysidine synthase family. In the C-terminal section; belongs to the purine/pyrimidine phosphoribosyltransferase family. Requires Mg(2+) as cofactor.

The protein localises to the cytoplasm. The enzyme catalyses IMP + diphosphate = hypoxanthine + 5-phospho-alpha-D-ribose 1-diphosphate. It carries out the reaction GMP + diphosphate = guanine + 5-phospho-alpha-D-ribose 1-diphosphate. The catalysed reaction is cytidine(34) in tRNA(Ile2) + L-lysine + ATP = lysidine(34) in tRNA(Ile2) + AMP + diphosphate + H(+). In terms of biological role, ligates lysine onto the cytidine present at position 34 of the AUA codon-specific tRNA(Ile) that contains the anticodon CAU, in an ATP-dependent manner. Cytidine is converted to lysidine, thus changing the amino acid specificity of the tRNA from methionine to isoleucine. The sequence is that of Bifunctional protein TilS/HprT (tilS/hprT) from Listeria monocytogenes serovar 1/2a (strain ATCC BAA-679 / EGD-e).